We begin with the raw amino-acid sequence, 245 residues long: Pyridoxine 5'-phosphate synthase (245 aa).

3-amino-2-oxopropyl phosphate is bound at residue N7. 9–10 is a 1-deoxy-D-xylulose 5-phosphate binding site; the sequence is DH. R18 provides a ligand contact to 3-amino-2-oxopropyl phosphate. The active-site Proton acceptor is H43. Residues R45 and H50 each coordinate 1-deoxy-D-xylulose 5-phosphate. Residue E70 is the Proton acceptor of the active site. 1-deoxy-D-xylulose 5-phosphate is bound at residue T100. The active-site Proton donor is the H190. 3-amino-2-oxopropyl phosphate-binding positions include G191 and 212-213; that span reads GH.

The protein belongs to the PNP synthase family. In terms of assembly, homooctamer; tetramer of dimers.

It is found in the cytoplasm. It catalyses the reaction 3-amino-2-oxopropyl phosphate + 1-deoxy-D-xylulose 5-phosphate = pyridoxine 5'-phosphate + phosphate + 2 H2O + H(+). It participates in cofactor biosynthesis; pyridoxine 5'-phosphate biosynthesis; pyridoxine 5'-phosphate from D-erythrose 4-phosphate: step 5/5. Catalyzes the complicated ring closure reaction between the two acyclic compounds 1-deoxy-D-xylulose-5-phosphate (DXP) and 3-amino-2-oxopropyl phosphate (1-amino-acetone-3-phosphate or AAP) to form pyridoxine 5'-phosphate (PNP) and inorganic phosphate. In Prochlorococcus marinus (strain NATL2A), this protein is Pyridoxine 5'-phosphate synthase.